Here is a 490-residue protein sequence, read N- to C-terminus: UDP-N-acetylmuramyl-tripeptide synthetase (490 aa).

Position 113–119 (113–119 (GTDGKTT)) interacts with ATP. UDP-N-acetyl-alpha-D-muramoyl-L-alanyl-D-glutamate contacts are provided by residues 158-159 (TT), Ser-185, and Arg-193. At Lys-225 the chain carries N6-carboxylysine.

It belongs to the MurCDEF family. MurE subfamily. In terms of processing, carboxylation is probably crucial for Mg(2+) binding and, consequently, for the gamma-phosphate positioning of ATP.

The protein localises to the cytoplasm. It participates in cell wall biogenesis; peptidoglycan biosynthesis. Its function is as follows. Catalyzes the addition of an amino acid to the nucleotide precursor UDP-N-acetylmuramoyl-L-alanyl-D-glutamate (UMAG) in the biosynthesis of bacterial cell-wall peptidoglycan. The polypeptide is UDP-N-acetylmuramyl-tripeptide synthetase (Deinococcus radiodurans (strain ATCC 13939 / DSM 20539 / JCM 16871 / CCUG 27074 / LMG 4051 / NBRC 15346 / NCIMB 9279 / VKM B-1422 / R1)).